Consider the following 449-residue polypeptide: UDP-N-acetylmuramoylalanine--D-glutamate ligase (449 aa).

Position 118–124 (118–124 (GSNGKTT)) interacts with ATP.

The protein belongs to the MurCDEF family.

It is found in the cytoplasm. It carries out the reaction UDP-N-acetyl-alpha-D-muramoyl-L-alanine + D-glutamate + ATP = UDP-N-acetyl-alpha-D-muramoyl-L-alanyl-D-glutamate + ADP + phosphate + H(+). It participates in cell wall biogenesis; peptidoglycan biosynthesis. Cell wall formation. Catalyzes the addition of glutamate to the nucleotide precursor UDP-N-acetylmuramoyl-L-alanine (UMA). The chain is UDP-N-acetylmuramoylalanine--D-glutamate ligase from Leuconostoc mesenteroides subsp. mesenteroides (strain ATCC 8293 / DSM 20343 / BCRC 11652 / CCM 1803 / JCM 6124 / NCDO 523 / NBRC 100496 / NCIMB 8023 / NCTC 12954 / NRRL B-1118 / 37Y).